A 179-amino-acid chain; its full sequence is tRNA (cytidine(56)-2'-O)-methyltransferase (179 aa).

Residues Leu82, 112 to 116 (GAEKV), and 130 to 137 (VGNQPHSE) each bind S-adenosyl-L-methionine.

It belongs to the aTrm56 family. In terms of assembly, homodimer.

The protein localises to the cytoplasm. It catalyses the reaction cytidine(56) in tRNA + S-adenosyl-L-methionine = 2'-O-methylcytidine(56) in tRNA + S-adenosyl-L-homocysteine + H(+). Specifically catalyzes the AdoMet-dependent 2'-O-ribose methylation of cytidine at position 56 in tRNAs. The sequence is that of tRNA (cytidine(56)-2'-O)-methyltransferase from Methanococcus maripaludis (strain C7 / ATCC BAA-1331).